A 361-amino-acid polypeptide reads, in one-letter code: UDP-N-acetylglucosamine--N-acetylmuramyl-(pentapeptide) pyrophosphoryl-undecaprenol N-acetylglucosamine transferase (361 aa).

Residues 13–15 (TGG), asparagine 125, arginine 167, serine 196, isoleucine 251, 270–275 (ALTVTE), and glutamine 296 contribute to the UDP-N-acetyl-alpha-D-glucosamine site.

This sequence belongs to the glycosyltransferase 28 family. MurG subfamily.

The protein resides in the cell inner membrane. It catalyses the reaction di-trans,octa-cis-undecaprenyl diphospho-N-acetyl-alpha-D-muramoyl-L-alanyl-D-glutamyl-meso-2,6-diaminopimeloyl-D-alanyl-D-alanine + UDP-N-acetyl-alpha-D-glucosamine = di-trans,octa-cis-undecaprenyl diphospho-[N-acetyl-alpha-D-glucosaminyl-(1-&gt;4)]-N-acetyl-alpha-D-muramoyl-L-alanyl-D-glutamyl-meso-2,6-diaminopimeloyl-D-alanyl-D-alanine + UDP + H(+). Its pathway is cell wall biogenesis; peptidoglycan biosynthesis. Cell wall formation. Catalyzes the transfer of a GlcNAc subunit on undecaprenyl-pyrophosphoryl-MurNAc-pentapeptide (lipid intermediate I) to form undecaprenyl-pyrophosphoryl-MurNAc-(pentapeptide)GlcNAc (lipid intermediate II). This Psychrobacter arcticus (strain DSM 17307 / VKM B-2377 / 273-4) protein is UDP-N-acetylglucosamine--N-acetylmuramyl-(pentapeptide) pyrophosphoryl-undecaprenol N-acetylglucosamine transferase.